The chain runs to 641 residues: ATP-dependent zinc metalloprotease FtsH 2 (641 aa).

The Periplasmic segment spans residues 1 to 100; it reads MLAYYVSVNQ…IDVKVIHNFW (100 aa). The chain crosses the membrane as a helical span at residues 101 to 121; that stretch reads GQAFLSVLPFLLFILALYFLF. Residues 122 to 641 lie on the Cytoplasmic side of the membrane; sequence RQQIRMAGRG…LLPGLEGAPA (520 aa). 193–200 is an ATP binding site; sequence GPPGTGKT. H415 serves as a coordination point for Zn(2+). E416 is an active-site residue. 2 residues coordinate Zn(2+): H419 and D491. Positions 593-641 are disordered; it reads KTGKMTNPPSKNSSPVSNGGEASSTKSPARQEETTKDGGLLPGLEGAPA. Low complexity-rich tracts occupy residues 599–610 and 630–641; these read NPPSKNSSPVSN and GGLLPGLEGAPA.

In the central section; belongs to the AAA ATPase family. The protein in the C-terminal section; belongs to the peptidase M41 family. Homohexamer. It depends on Zn(2+) as a cofactor.

It localises to the cell inner membrane. Functionally, acts as a processive, ATP-dependent zinc metallopeptidase for both cytoplasmic and membrane proteins. Plays a role in the quality control of integral membrane proteins. The chain is ATP-dependent zinc metalloprotease FtsH 2 from Methylacidiphilum infernorum (isolate V4) (Methylokorus infernorum (strain V4)).